A 282-amino-acid chain; its full sequence is DNA-dependent metalloprotease WSS1 homolog 2 (282 aa).

The region spanning 1-75 is the Ubiquitin-like domain; the sequence is MELKFSCRGN…CLIRQDKDIV (75 aa). Positions 99-274 constitute a WLM domain; sequence PHTTPKPASI…LLAAAERRKQ (176 aa). Residue His-202 coordinates Zn(2+). Residue Glu-203 is part of the active site. Zn(2+) is bound by residues His-206 and His-212. The segment at 234 to 282 is disordered; the sequence is GKPGSYVSDRASYTPQQDNDDEDQKNHRRDLLLAAAERRKQSGSKVQKE. Over residues 269-282 the composition is skewed to basic and acidic residues; that stretch reads AERRKQSGSKVQKE.

Belongs to the peptidase M3 family. WSS1-like metalloprotease (WLM) subfamily. It depends on Zn(2+) as a cofactor.

It is found in the cytoplasm. It localises to the nucleus. Metalloendopeptidase that acts selectively on DNA-binding proteins. DNA is needed to bring the protease and substrates together to enable proteolysis. Involved in the repair of toxic DNA-protein cross-links (DPCs) such as covalently trapped topoisomerase 1 (TOP1) adducts on DNA lesions or DPCs induced by reactive compounds such as formaldehyde. This Schizosaccharomyces pombe (strain 972 / ATCC 24843) (Fission yeast) protein is DNA-dependent metalloprotease WSS1 homolog 2.